Reading from the N-terminus, the 66-residue chain is Toxin BomPI (66 aa).

The 63-residue stretch at 2–64 (RDAYIAQPEN…VPIRIEGKCH (63 aa)) folds into the LCN-type CS-alpha/beta domain. 4 disulfide bridges follow: C12-C63, C16-C36, C22-C46, and C26-C48.

The protein belongs to the long (4 C-C) scorpion toxin superfamily. Sodium channel inhibitor family. Alpha subfamily. Expressed by the venom gland.

Its subcellular location is the secreted. Alpha toxins bind voltage-independently at site-3 of sodium channels (Nav) and inhibit the inactivation of the activated channels, thereby blocking neuronal transmission. The chain is Toxin BomPI from Buthus occitanus mardochei (Moroccan scorpion).